We begin with the raw amino-acid sequence, 260 residues long: Coiled-coil domain-containing protein 172 (260 aa).

Residues 13-194 (SEHQAEESRR…FEDKKHEAIC (182 aa)) are a coiled coil.

It belongs to the CCDC172 family. As to quaternary structure, may interact with TEKT2.

The protein localises to the cytoplasm. Its subcellular location is the cell projection. It is found in the cilium. The polypeptide is Coiled-coil domain-containing protein 172 (CCDC172) (Bos taurus (Bovine)).